The following is a 317-amino-acid chain: Uridylate kinase (317 aa).

9–12 (KISG) is a binding site for ATP. G49 provides a ligand contact to UMP. G50 and R54 together coordinate ATP. Residues D69 and 130-137 (TGRPYFTT) contribute to the UMP site. Positions 158, 164, and 167 each coordinate ATP.

This sequence belongs to the UMP kinase family. In terms of assembly, homohexamer.

It localises to the cytoplasm. The enzyme catalyses UMP + ATP = UDP + ADP. The protein operates within pyrimidine metabolism; CTP biosynthesis via de novo pathway; UDP from UMP (UMPK route): step 1/1. Inhibited by UTP. In terms of biological role, catalyzes the reversible phosphorylation of UMP to UDP. This Malacoplasma penetrans (strain HF-2) (Mycoplasma penetrans) protein is Uridylate kinase.